A 681-amino-acid polypeptide reads, in one-letter code: MSNLKMKEAALIYLDRSGGLQKFIDDCKYYNDSKQSYAVYRFKILINPSDVVELDAELGNHILHQPLKAAEVFQSVCFIAVKTLSLIGQLQTETQINIVLKLTHLPPLPSYGLDLCEFPLDYTSQRFYMMQGIVIAMTTITKYTQGARFLCSDEACPLSKGFQYIRVHVPGATESATIRNDFLCNLCASSLQEDRKFRVLGDKQIVEIIATKALRAFQGYSNNQPFRFQSLTIFLRDESVNKMNIGNEYKIIGIPTCVKTSQTAVCIEANSITFCNSKVPSGISDNFRCLLSLTSSSCWKFTAILANIFASQITPPGTYNLLKLCLLMSLVQTTDRNKELEDCLDILIITSDTLLIDRLLNFSINLVPRGIRHLVSTEIFPTLSRNKYGTGAVSIQAGSALLAKGGICFIGDLASHKKDKLEQLQTVLESRSITVYIPGKKFGEDIDQQMTFPVQCSFWSFVDVDSSSRRNAQKINTLIGQMDCSLIPANLVEAFGLLINCNESSPCHPFLPTVQHTLNKAINPEGLFYAASRQFTTEDFEKLLAFAKNLNVEFSLEAERMTHGYYLASRRIRTGSVCGSKLSASALKYLVFLSEAHARLNLRNKVLKEDVLIAALLFETSLTLKYGATVFCVAPNAVFPFELYNEEYLEQRDLYLTQCQQQLEQFIATYGPGTTIFSSDE.

Ser-292 is subject to Phosphoserine. One can recognise an MCM domain in the interval 533–621 (RQFTTEDFEK…LIAALLFETS (89 aa)).

Its function is as follows. Plays an important role in meiotic recombination and associated DNA double-strand break repair. The polypeptide is Minichromosome maintenance domain-containing protein 2 (MCMDC2) (Homo sapiens (Human)).